Here is a 328-residue protein sequence, read N- to C-terminus: MKENFWSELPRPFFILAPMEDVTDIVFRHVVSEAARPDVFFTEFTNTESFCHPEGIHSVRGRLTFSEDEHPMVAHIWGDKPEQFRETSIQLAKMGFKGIDLNMGCPVANVAKKGKGSGLILRPDVAAEIIQATKAGGLPVSVKTRLGYYEIDEWKDWLKHVFEQDIANLSIHLRTRKEMSKVDAHWELIEAIKNLRDEIAPNTLLTINGDIPDRKTGLELAEKYGIDGVMIGRGIFHNPFAFEKEPREHTSKELLDLLRLHLSLFNKYEKDEIRQFKSLRRFFKIYVRGIRGASELRHQLMNTQSIAEARALLDEFEAQMDEDVKIEL.

Position 18–20 (18–20) interacts with FMN; the sequence is PME. The active-site Proton donor is the cysteine 105. FMN contacts are provided by residues lysine 143, 208–210, and 232–233; these read NGD and GR.

Belongs to the Dus family. FMN is required as a cofactor.

The enzyme catalyses a 5,6-dihydrouridine in tRNA + NAD(+) = a uridine in tRNA + NADH + H(+). It carries out the reaction a 5,6-dihydrouridine in tRNA + NADP(+) = a uridine in tRNA + NADPH + H(+). Its function is as follows. Catalyzes the synthesis of 5,6-dihydrouridine (D), a modified base found in the D-loop of most tRNAs, via the reduction of the C5-C6 double bond in target uridines. This chain is Probable tRNA-dihydrouridine synthase (dus), found in Staphylococcus aureus (strain Mu50 / ATCC 700699).